Here is a 338-residue protein sequence, read N- to C-terminus: Anthranilate phosphoribosyltransferase (338 aa).

5-phospho-alpha-D-ribose 1-diphosphate is bound by residues G80, 83-84 (GD), T88, 90-93 (NIST), 108-116 (KHGNRAVSS), and S120. An anthranilate-binding site is contributed by G80. S92 serves as a coordination point for Mg(2+). Residue N111 participates in anthranilate binding. R166 provides a ligand contact to anthranilate. The Mg(2+) site is built by D225 and E226.

Belongs to the anthranilate phosphoribosyltransferase family. In terms of assembly, homodimer. The cofactor is Mg(2+).

It catalyses the reaction N-(5-phospho-beta-D-ribosyl)anthranilate + diphosphate = 5-phospho-alpha-D-ribose 1-diphosphate + anthranilate. It participates in amino-acid biosynthesis; L-tryptophan biosynthesis; L-tryptophan from chorismate: step 2/5. Functionally, catalyzes the transfer of the phosphoribosyl group of 5-phosphorylribose-1-pyrophosphate (PRPP) to anthranilate to yield N-(5'-phosphoribosyl)-anthranilate (PRA). The chain is Anthranilate phosphoribosyltransferase from Thermoanaerobacter sp. (strain X514).